The chain runs to 507 residues: Probable malate:quinone oxidoreductase 2 (507 aa).

The protein belongs to the MQO family. FAD is required as a cofactor.

The enzyme catalyses (S)-malate + a quinone = a quinol + oxaloacetate. Its pathway is carbohydrate metabolism; tricarboxylic acid cycle; oxaloacetate from (S)-malate (quinone route): step 1/1. This chain is Probable malate:quinone oxidoreductase 2, found in Pseudomonas aeruginosa (strain ATCC 15692 / DSM 22644 / CIP 104116 / JCM 14847 / LMG 12228 / 1C / PRS 101 / PAO1).